The sequence spans 102 residues: Large ribosomal subunit protein bL21 (102 aa).

It belongs to the bacterial ribosomal protein bL21 family. Part of the 50S ribosomal subunit. Contacts protein L20.

In terms of biological role, this protein binds to 23S rRNA in the presence of protein L20. This is Large ribosomal subunit protein bL21 from Cytophaga hutchinsonii (strain ATCC 33406 / DSM 1761 / CIP 103989 / NBRC 15051 / NCIMB 9469 / D465).